Consider the following 316-residue polypeptide: MRDIIKDQGLLSFLPQKLDAELVQGSTMVKHAFPIFQKGGVVMDVTNVTQAEIAEDAGATAVMVLDKLPYDVRKSGGVARMADPKIIEEVMNSITIPVMAKVRIGHYYEAKILEALGVDMIDESEVLTPADEEHHINKWEFKVPFVNGARNLGEALRRITEGASMIRTKGEAGTGNVSEAVKHMKIINGEIRSLISMSEEDRMKKAREYQVPYQIVELTVKLGRLPVVNFAAGGIATPADAALMMWLGADGIFVGSGIFKSQDPDVRAKAIVLATANWEDPEIVLEAQKMISESKSMMGIDIKALKPEELLQVRGQ.

A D-ribose 5-phosphate-binding site is contributed by D44. The active-site Schiff-base intermediate with D-ribose 5-phosphate is K101. G173 serves as a coordination point for D-ribose 5-phosphate. Residue K185 participates in D-glyceraldehyde 3-phosphate binding. D-ribose 5-phosphate contacts are provided by residues G234 and 255–256 (GS).

Belongs to the PdxS/SNZ family. As to quaternary structure, in the presence of PdxT, forms a dodecamer of heterodimers.

The enzyme catalyses aldehydo-D-ribose 5-phosphate + D-glyceraldehyde 3-phosphate + L-glutamine = pyridoxal 5'-phosphate + L-glutamate + phosphate + 3 H2O + H(+). Its pathway is cofactor biosynthesis; pyridoxal 5'-phosphate biosynthesis. Functionally, catalyzes the formation of pyridoxal 5'-phosphate from ribose 5-phosphate (RBP), glyceraldehyde 3-phosphate (G3P) and ammonia. The ammonia is provided by the PdxT subunit. Can also use ribulose 5-phosphate and dihydroxyacetone phosphate as substrates, resulting from enzyme-catalyzed isomerization of RBP and G3P, respectively. The protein is Pyridoxal 5'-phosphate synthase subunit PdxS of Sulfurisphaera tokodaii (strain DSM 16993 / JCM 10545 / NBRC 100140 / 7) (Sulfolobus tokodaii).